Consider the following 1960-residue polypeptide: [F-actin]-monooxygenase MICAL3 (1960 aa).

Residues 2–494 are monooxygenase domain; sequence EESKNEATNR…RHLYDTGDTK (493 aa). Residues cysteine 97, 116–118, 123–125, phenylalanine 183, tyrosine 298, and aspartate 398 each bind FAD; these read EKR and RNN. Positions 518–624 constitute a Calponin-homology (CH) domain; sequence VARSSKLLGW…YLTQFYEMFK (107 aa). At serine 649 the chain carries Phosphoserine. A disordered region spans residues 658-704; sequence GQTISRKRSPKDKKEKDLDGAGKRRKTSQSEEEDTPRGHRGARPTLV. The span at 669 to 679 shows a compositional bias: basic and acidic residues; sequence DKKEKDLDGAG. Phosphoserine is present on residues serine 685 and serine 687. The LIM zinc-binding domain maps to 762-824; the sequence is DTCYFCQKRV…KPHYCYRLSG (63 aa). Residues cysteine 764, cysteine 767, histidine 785, cysteine 788, cysteine 791, cysteine 794, cysteine 814, and histidine 817 each coordinate Zn(2+). 2 disordered regions span residues 826 to 887 and 906 to 1295; these read AQRK…LRGT and LEEV…EALK. Position 887 is a phosphothreonine (threonine 887). The residue at position 971 (serine 971) is a Phosphoserine. Over residues 984–1014 the composition is skewed to acidic residues; the sequence is GEEEEEDEEDEEEEEEEEDEEDEEEDEDESS. Basic and acidic residues-rich tracts occupy residues 1039–1051 and 1072–1084; these read HWTHIRESQEERA and DVDSEPAEIKGEA. Residues serine 1129, serine 1139, serine 1156, and serine 1188 each carry the phosphoserine modification. 2 stretches are compositionally biased toward pro residues: residues 1192 to 1203 and 1217 to 1233; these read SPLPEPSTPPAE and RTPPSPASPQRPSPPTQ. Position 1250 is a phosphoserine (serine 1250). Threonine 1252 bears the Phosphothreonine mark. Phosphoserine is present on residues serine 1254, serine 1286, and serine 1313. Residues 1277 to 1286 are compositionally biased toward polar residues; it reads QGVTKDTLGS. 2 disordered regions span residues 1316 to 1550 and 1564 to 1782; these read LTPV…KRGL and RMRA…EEEL. Threonine 1317 carries the phosphothreonine modification. Over residues 1379–1393 the composition is skewed to basic and acidic residues; sequence PDREPKGPREEHRDL. Residues 1394–1406 are compositionally biased toward low complexity; the sequence is SSSSGLGLQGSSS. Residue serine 1404 is modified to Phosphoserine. A compositionally biased stretch (polar residues) spans 1407–1425; sequence RTRTPGSQSFNTSDSTMLT. At threonine 1425 the chain carries Phosphothreonine. The segment covering 1485 to 1503 has biased composition (acidic residues); sequence SVDEIPFADDVEDTYDDNT. Residues 1594-1611 are compositionally biased toward low complexity; that stretch reads AAAAPRTPRTPAPRRATA. The span at 1616-1627 shows a compositional bias: basic and acidic residues; the sequence is GPEEPAPRHEAT. Over residues 1633–1653 the composition is skewed to low complexity; it reads SPPSDSGGPDGSVTSSEGSSG. The segment covering 1654-1672 has biased composition (basic residues); the sequence is KSKKRSSLFSPRRSKKEKK. Residues serine 1660 and serine 1663 each carry the phosphoserine modification. Residues 1718-1727 show a composition bias toward polar residues; sequence CPSTPSSGTT. Basic and acidic residues predominate over residues 1762 to 1778; it reads VLERTSQKSRKEPRTYT. A coiled-coil region spans residues 1779–1952; sequence EEELNAKLTR…DKDLEAAMLS (174 aa). In terms of domain architecture, bMERB spans 1799-1948; that stretch reads KQEELKRLHR…EKEEDKDLEA (150 aa). Serine 1870 bears the Phosphoserine mark.

It belongs to the Mical family. As to quaternary structure, interacts with RAB1B, RAB8A, RAB10, RAB13 and RAB15 (in their GTP-bound forms); binding to RAB1B is of low affinity compared to other Rab proteins; at least in case of RAB8A can bind 2 molecules of RAB8A simultaneously through a high and a low affinity binding site, respectively. Interacts with ERC1 and RAB8A; may bridge ERC1 with RAB8A. Interacts with KIF23 and ERC1; enhances the interaction between KIF23 and ERC1. Interacts with NINL. The cofactor is FAD.

The protein localises to the cytoplasm. It localises to the cell cortex. It is found in the cytoskeleton. The protein resides in the nucleus. Its subcellular location is the midbody. The protein localises to the spindle. It localises to the cilium basal body. The catalysed reaction is L-methionyl-[F-actin] + NADPH + O2 + H(+) = L-methionyl-(R)-S-oxide-[F-actin] + NADP(+) + H2O. Functionally, monooxygenase that promotes depolymerization of F-actin by mediating oxidation of specific methionine residues on actin to form methionine-sulfoxide, resulting in actin filament disassembly and preventing repolymerization. In the absence of actin, it also functions as a NADPH oxidase producing H(2)O(2). Seems to act as Rab effector protein and play a role in vesicle trafficking. Involved in exocytic vesicles tethering and fusion: the monooxygenase activity is required for this process and implicates RAB8A associated with exocytotic vesicles. Required for cytokinesis. Contributes to stabilization and/or maturation of the intercellular bridge independently of its monooxygenase activity. Promotes recruitment of Rab8 and ERC1 to the intercellular bridge, and together these proteins are proposed to function in timely abscission. The protein is [F-actin]-monooxygenase MICAL3 (MICAL3) of Bos taurus (Bovine).